The following is a 485-amino-acid chain: Probable cobyric acid synthase (485 aa).

In terms of domain architecture, GATase cobBQ-type spans 250 to 435; the sequence is EIEVAVIRLP…LHGLFDNRNI (186 aa). The Nucleophile role is filled by C328. The active site involves H427.

This sequence belongs to the CobB/CobQ family. CobQ subfamily.

It participates in cofactor biosynthesis; adenosylcobalamin biosynthesis. Its function is as follows. Catalyzes amidations at positions B, D, E, and G on adenosylcobyrinic A,C-diamide. NH(2) groups are provided by glutamine, and one molecule of ATP is hydrogenolyzed for each amidation. In Methanosarcina mazei (strain ATCC BAA-159 / DSM 3647 / Goe1 / Go1 / JCM 11833 / OCM 88) (Methanosarcina frisia), this protein is Probable cobyric acid synthase.